Here is a 469-residue protein sequence, read N- to C-terminus: Adenosylhomocysteinase (469 aa).

Residues Thr63, Asp139, and Glu164 each coordinate substrate. 165–167 contributes to the NAD(+) binding site; that stretch reads TTT. 2 residues coordinate substrate: Lys194 and Asp198. Residues Asn199, 228 to 233, Glu251, Asn300, 321 to 323, and Asn375 contribute to the NAD(+) site; these read GYGDVG and IGH.

The protein belongs to the adenosylhomocysteinase family. It depends on NAD(+) as a cofactor.

It is found in the cytoplasm. The catalysed reaction is S-adenosyl-L-homocysteine + H2O = L-homocysteine + adenosine. Its pathway is amino-acid biosynthesis; L-homocysteine biosynthesis; L-homocysteine from S-adenosyl-L-homocysteine: step 1/1. Functionally, may play a key role in the regulation of the intracellular concentration of adenosylhomocysteine. In Pseudomonas fluorescens (strain Pf0-1), this protein is Adenosylhomocysteinase.